A 210-amino-acid polypeptide reads, in one-letter code: uncharacterized protein (210 aa).

This is an uncharacterized protein from Escherichia coli (strain K12).